The sequence spans 1512 residues: DNA polymerase (1512 aa).

This sequence belongs to the DNA polymerase type-B family.

The protein resides in the host nucleus. The enzyme catalyses DNA(n) + a 2'-deoxyribonucleoside 5'-triphosphate = DNA(n+1) + diphosphate. The chain is DNA polymerase (57/58) from Ictalurid herpesvirus 1 (strain Auburn) (IcHV-1).